The chain runs to 410 residues: Argininosuccinate synthase (410 aa).

Position 6–14 (6–14 (AYSGGLDTS)) interacts with ATP. Residue Tyr-84 coordinates L-citrulline. Gly-114 contacts ATP. L-aspartate contacts are provided by Thr-116, Asn-120, and Asp-121. Asn-120 lines the L-citrulline pocket. L-citrulline is bound by residues Arg-124, Ser-169, Ser-178, Glu-254, and Tyr-266.

Belongs to the argininosuccinate synthase family. Type 1 subfamily. Homotetramer.

It is found in the cytoplasm. It carries out the reaction L-citrulline + L-aspartate + ATP = 2-(N(omega)-L-arginino)succinate + AMP + diphosphate + H(+). It functions in the pathway amino-acid biosynthesis; L-arginine biosynthesis; L-arginine from L-ornithine and carbamoyl phosphate: step 2/3. This Pyrococcus furiosus (strain ATCC 43587 / DSM 3638 / JCM 8422 / Vc1) protein is Argininosuccinate synthase.